The chain runs to 141 residues: Large ribosomal subunit protein uL11 (141 aa).

The protein belongs to the universal ribosomal protein uL11 family. As to quaternary structure, part of the ribosomal stalk of the 50S ribosomal subunit. Interacts with L10 and the large rRNA to form the base of the stalk. L10 forms an elongated spine to which L12 dimers bind in a sequential fashion forming a multimeric L10(L12)X complex. Post-translationally, one or more lysine residues are methylated.

In terms of biological role, forms part of the ribosomal stalk which helps the ribosome interact with GTP-bound translation factors. The protein is Large ribosomal subunit protein uL11 of Chlorobium phaeobacteroides (strain BS1).